A 531-amino-acid chain; its full sequence is NADH-quinone oxidoreductase subunit N (531 aa).

A run of 14 helical transmembrane segments spans residues 8–28 (VEYF…AGVL), 41–61 (AQVT…IVVA), 81–101 (ATLF…VFMA), 146–166 (GATQ…MMVF), 172–192 (LLTM…MCGL), 208–228 (FLLG…LYGA), 250–270 (ALAG…AVPF), 282–302 (PTPI…GALL), 318–338 (PVLW…AVNQ), 350–370 (VAHV…GLSA), 372–392 (LFYL…VGLV), 418–438 (IVGV…LTSG), 453–473 (GAVP…YFYV), and 500–520 (AAIA…QPVL).

Belongs to the complex I subunit 2 family. In terms of assembly, NDH-1 is composed of 14 different subunits. Subunits NuoA, H, J, K, L, M, N constitute the membrane sector of the complex.

It localises to the cell membrane. It carries out the reaction a quinone + NADH + 5 H(+)(in) = a quinol + NAD(+) + 4 H(+)(out). Functionally, NDH-1 shuttles electrons from NADH, via FMN and iron-sulfur (Fe-S) centers, to quinones in the respiratory chain. The immediate electron acceptor for the enzyme in this species is believed to be a menaquinone. Couples the redox reaction to proton translocation (for every two electrons transferred, four hydrogen ions are translocated across the cytoplasmic membrane), and thus conserves the redox energy in a proton gradient. This Mycobacterium tuberculosis (strain CDC 1551 / Oshkosh) protein is NADH-quinone oxidoreductase subunit N.